A 97-amino-acid chain; its full sequence is UPF0223 protein lp_2149 (97 aa).

This sequence belongs to the UPF0223 family.

The polypeptide is UPF0223 protein lp_2149 (Lactiplantibacillus plantarum (strain ATCC BAA-793 / NCIMB 8826 / WCFS1) (Lactobacillus plantarum)).